The chain runs to 473 residues: Iron transporter SMF3 (473 aa).

The next 2 membrane-spanning stretches (helical) occupy residues 14-34 (FIGP…YATS) and 44-64 (TLLF…CLCV). Asn-87 carries N-linked (GlcNAc...) asparagine glycosylation. 9 helical membrane passes run 97–117 (AIIA…QILF), 119–139 (IPLT…LMFY), 152–172 (FEFG…LELF), 198–218 (ALYI…LYLG), 257–277 (LIIS…IVAG), 297–317 (LLVH…MLCS), 352–372 (LIAI…GISD), 373–393 (ILNF…APLI), and 448–468 (VFVW…YLLG).

It belongs to the NRAMP family.

Its subcellular location is the vacuole membrane. The protein localises to the endoplasmic reticulum membrane. Its function is as follows. Has a role in controlling the cellular iron ion levels. Mobilizes vacuolar stores of iron in conditions of low iron levels. This chain is Iron transporter SMF3 (SMF3), found in Saccharomyces cerevisiae (strain ATCC 204508 / S288c) (Baker's yeast).